We begin with the raw amino-acid sequence, 384 residues long: Formate-dependent phosphoribosylglycinamide formyltransferase (384 aa).

N(1)-(5-phospho-beta-D-ribosyl)glycinamide contacts are provided by residues 14–15 (EL) and Glu-74. ATP is bound by residues Arg-106, Lys-147, 152-157 (SSGKGQ), 187-190 (EEFI), and Glu-195. The ATP-grasp domain occupies 111–300 (RLAAETLGLA…EFALHVRAIL (190 aa)). Mg(2+) is bound by residues Glu-259 and Glu-271. Residues Asp-278, Lys-348, and 355-356 (RR) each bind N(1)-(5-phospho-beta-D-ribosyl)glycinamide.

It belongs to the PurK/PurT family. Homodimer.

The enzyme catalyses N(1)-(5-phospho-beta-D-ribosyl)glycinamide + formate + ATP = N(2)-formyl-N(1)-(5-phospho-beta-D-ribosyl)glycinamide + ADP + phosphate + H(+). The protein operates within purine metabolism; IMP biosynthesis via de novo pathway; N(2)-formyl-N(1)-(5-phospho-D-ribosyl)glycinamide from N(1)-(5-phospho-D-ribosyl)glycinamide (formate route): step 1/1. Its function is as follows. Catalyzes two reactions: the first one is the production of beta-formyl glycinamide ribonucleotide (GAR) from formate, ATP and beta GAR; the second, a side reaction, is the production of acetyl phosphate and ADP from acetate and ATP. In terms of biological role, involved in the de novo purine biosynthesis. Catalyzes the transfer of formate to 5-phospho-ribosyl-glycinamide (GAR), producing 5-phospho-ribosyl-N-formylglycinamide (FGAR). Formate is provided by PurU via hydrolysis of 10-formyl-tetrahydrofolate. This Bacillus subtilis (strain 168) protein is Formate-dependent phosphoribosylglycinamide formyltransferase.